Here is a 765-residue protein sequence, read N- to C-terminus: Putative maltooligosyl trehalose synthase (765 aa).

Belongs to the glycosyl hydrolase 13 family. Monomer.

It carries out the reaction 4-[(1-&gt;4)-alpha-D-glucosyl](n-1)-D-glucose = 1-[(1-&gt;4)-alpha-D-glucosyl](n-1)-alpha-D-glucose. Its function is as follows. Catalyzes the conversion of maltooligosaccharide into the non-reducing saccharide, maltooligosyl trehalose (alpha-maltooligosyl alpha-D-glucoside) by intramolecular transglycosylation. This chain is Putative maltooligosyl trehalose synthase (treY), found in Mycobacterium tuberculosis (strain CDC 1551 / Oshkosh).